We begin with the raw amino-acid sequence, 381 residues long: E3 ubiquitin-protein ligase KCMF1 (381 aa).

Ser2 carries the post-translational modification N-acetylserine. At Ser2 the chain carries Phosphoserine. Residues His4–Asp60 form a ZZ-type zinc finger. Cys9, Cys12, Cys24, Cys27, Cys33, Cys36, His46, and His50 together coordinate Zn(2+). A C2H2-type zinc finger spans residues Phe78–His101. Positions Met154–Glu194 are disordered. Ser169, Ser189, and Ser212 each carry phosphoserine. A compositionally biased stretch (low complexity) spans Ser175 to Ser192. Residues Ala224–Asn259 are a coiled coil. 2 positions are modified to phosphoserine: Ser335 and Ser336.

It belongs to the KCMF1 family. As to quaternary structure, component of the SIFI complex, composed of KCMF1, UBR4 and calmodulin (CALM1, CALM2 or CALM3). As to expression, testis, liver, kidney, heart and skeletal muscle.

The protein resides in the cytoplasm. The protein localises to the late endosome. Its subcellular location is the lysosome. It catalyses the reaction S-ubiquitinyl-[E2 ubiquitin-conjugating enzyme]-L-cysteine + [acceptor protein]-L-lysine = [E2 ubiquitin-conjugating enzyme]-L-cysteine + N(6)-ubiquitinyl-[acceptor protein]-L-lysine.. Its pathway is protein modification; protein ubiquitination. In terms of biological role, E3 ubiquitin-protein ligase which accepts ubiquitin from an E2 ubiquitin-conjugating enzyme and then transfers it to targeted substrates, promoting their degradation by the proteasome. Together with UBR4, component of the N-end rule pathway: ubiquitinates proteins bearing specific N-terminal residues that are destabilizing according to the N-end rule, leading to their degradation. Does not ubiquitinate proteins that are acetylated at the N-terminus. Together with UBR4, part of a protein quality control pathway that catalyzes ubiquitination and degradation of proteins that have been oxidized in response to reactive oxygen species (ROS): recognizes proteins with an Arg-CysO3(H) degron at the N-terminus, and mediates assembly of heterotypic 'Lys-63'-/'Lys-27'-linked branched ubiquitin chains on oxidized proteins, leading to their degradation by autophagy. Catalytic component of the SIFI complex, a multiprotein complex required to inhibit the mitochondrial stress response after a specific stress event has been resolved: ubiquitinates and degrades (1) components of the HRI-mediated signaling of the integrated stress response, such as DELE1 and EIF2AK1/HRI, as well as (2) unimported mitochondrial precursors. Within the SIFI complex, UBR4 initiates ubiquitin chain that are further elongated or branched by KCMF1. This chain is E3 ubiquitin-protein ligase KCMF1, found in Mus musculus (Mouse).